Here is a 311-residue protein sequence, read N- to C-terminus: Acetyl-coenzyme A carboxylase carboxyl transferase subunit alpha (311 aa).

The 251-residue stretch at 36–286 (NLDKEVSKIF…GEYFLSELKK (251 aa)) folds into the CoA carboxyltransferase C-terminal domain.

Belongs to the AccA family. As to quaternary structure, acetyl-CoA carboxylase is a heterohexamer composed of biotin carboxyl carrier protein (AccB), biotin carboxylase (AccC) and two subunits each of ACCase subunit alpha (AccA) and ACCase subunit beta (AccD).

The protein localises to the cytoplasm. The enzyme catalyses N(6)-carboxybiotinyl-L-lysyl-[protein] + acetyl-CoA = N(6)-biotinyl-L-lysyl-[protein] + malonyl-CoA. It participates in lipid metabolism; malonyl-CoA biosynthesis; malonyl-CoA from acetyl-CoA: step 1/1. In terms of biological role, component of the acetyl coenzyme A carboxylase (ACC) complex. First, biotin carboxylase catalyzes the carboxylation of biotin on its carrier protein (BCCP) and then the CO(2) group is transferred by the carboxyltransferase to acetyl-CoA to form malonyl-CoA. The protein is Acetyl-coenzyme A carboxylase carboxyl transferase subunit alpha of Sulfurimonas denitrificans (strain ATCC 33889 / DSM 1251) (Thiomicrospira denitrificans (strain ATCC 33889 / DSM 1251)).